The chain runs to 507 residues: Histidine ammonia-lyase (507 aa).

Positions 142–144 (ASG) form a cross-link, 5-imidazolinone (Ala-Gly). Residue S143 is modified to 2,3-didehydroalanine (Ser).

It belongs to the PAL/histidase family. Contains an active site 4-methylidene-imidazol-5-one (MIO), which is formed autocatalytically by cyclization and dehydration of residues Ala-Ser-Gly.

The protein resides in the cytoplasm. It carries out the reaction L-histidine = trans-urocanate + NH4(+). It functions in the pathway amino-acid degradation; L-histidine degradation into L-glutamate; N-formimidoyl-L-glutamate from L-histidine: step 1/3. This chain is Histidine ammonia-lyase, found in Maricaulis maris (strain MCS10) (Caulobacter maris).